A 544-amino-acid chain; its full sequence is DNA mismatch repair protein MutL (544 aa).

This sequence belongs to the DNA mismatch repair MutL/HexB family.

Its function is as follows. This protein is involved in the repair of mismatches in DNA. It is required for dam-dependent methyl-directed DNA mismatch repair. May act as a 'molecular matchmaker', a protein that promotes the formation of a stable complex between two or more DNA-binding proteins in an ATP-dependent manner without itself being part of a final effector complex. The polypeptide is DNA mismatch repair protein MutL (Thermodesulfovibrio yellowstonii (strain ATCC 51303 / DSM 11347 / YP87)).